Here is a 226-residue protein sequence, read N- to C-terminus: Ribosomal RNA large subunit methyltransferase E (226 aa).

Positions 82, 84, 100, 116, and 140 each coordinate S-adenosyl-L-methionine. The active-site Proton acceptor is the K180.

It belongs to the class I-like SAM-binding methyltransferase superfamily. RNA methyltransferase RlmE family.

It localises to the cytoplasm. It catalyses the reaction uridine(2552) in 23S rRNA + S-adenosyl-L-methionine = 2'-O-methyluridine(2552) in 23S rRNA + S-adenosyl-L-homocysteine + H(+). Its function is as follows. Specifically methylates the uridine in position 2552 of 23S rRNA at the 2'-O position of the ribose in the fully assembled 50S ribosomal subunit. This is Ribosomal RNA large subunit methyltransferase E from Caulobacter sp. (strain K31).